The primary structure comprises 246 residues: Probable transcriptional regulatory protein PM0980 (246 aa).

The protein belongs to the TACO1 family.

The protein resides in the cytoplasm. The protein is Probable transcriptional regulatory protein PM0980 of Pasteurella multocida (strain Pm70).